The primary structure comprises 324 residues: UDP-galactose transporter homolog 1 (324 aa).

2 helical membrane-spanning segments follow: residues 7–27 (LVIA…AQEP) and 42–62 (HSSF…LCYL). A glycan (N-linked (GlcNAc...) asparagine) is linked at Asn97. 7 helical membrane passes run 106-126 (VGYM…HVLV), 135-155 (KALV…GGAE), 161-181 (ASLY…LTNA), 199-219 (HLMV…LVLF), 237-257 (ILTY…FVFF), 265-285 (LVLA…SIVV), and 290-310 (VRPV…WETV).

Belongs to the nucleotide-sugar transporter family. SLC35B subfamily.

It is found in the endoplasmic reticulum membrane. May be involved in specific transport of UDP-Gal from the cytosol to the Golgi lumen. Involved in the maintenance of optimal conditions for the folding of secretory pathway proteins in the endoplasmic reticulum. In Eremothecium gossypii (strain ATCC 10895 / CBS 109.51 / FGSC 9923 / NRRL Y-1056) (Yeast), this protein is UDP-galactose transporter homolog 1 (HUT1).